Here is a 98-residue protein sequence, read N- to C-terminus: uncharacterized protein (98 aa).

This is an uncharacterized protein from Dictyostelium discoideum (Social amoeba).